The sequence spans 231 residues: Venom allergen 3 homolog (231 aa).

A signal peptide spans 1 to 21 (MSSCMLFFTVIIAGVFMGTIA). Cystine bridges form between Cys25–Cys40, Cys30–Cys124, and Cys51–Cys117. An SCP domain is found at 68-215 (VTLHNQLRRK…WNQQYLVCNY (148 aa)). N-linked (GlcNAc...) asparagine glycosylation occurs at Asn145. The cysteines at positions 196 and 213 are disulfide-linked.

It belongs to the CRISP family. In terms of tissue distribution, expressed by the venom gland.

The protein localises to the secreted. This Dinoponera quadriceps (South American ant) protein is Venom allergen 3 homolog.